The sequence spans 675 residues: Protein PALS1 (675 aa).

The tract at residues Met1–Glu78 is disordered. Positions Met1 to Glu345 are required for the correct localization of PALS1 and PATJ at cell-cell contacts and the normal formation of tight junctions and adherens junctions. 2 stretches are compositionally biased toward basic and acidic residues: residues Val10–Ala36 and Ala54–Glu78. Phosphoserine is present on residues Ser14 and Ser25. The tract at residues Val21–Asp140 is interaction with PARD6B. 2 positions are modified to phosphoserine: Ser83 and Ser84. L27 domains lie at Lys120–Ser177 and Pro179–Glu235. The interval Pro181–Tyr243 is interaction with LIN7C. The region spanning Ile256–Gln336 is the PDZ domain. Residues Glu345–Glu417 form the SH3 domain. The Guanylate kinase-like domain maps to Lys479–Asn660. Gly486–Asn493 contacts ATP.

This sequence belongs to the MAGUK family. In terms of assembly, heterodimer with MPP1. Forms a heterotrimeric complex composed of PALS1, LIN7B and PATJ; the N-terminal L27 domain of PALS1 interacts with the L27 domain of PATJ and the C-terminal L27 domain of PALS1 interacts with the L27 domain of LIN7B. Component of a complex composed of PALS1, CRB1 and MPP4. Component of a complex whose core is composed of ARHGAP17, AMOT, PALS1, PATJ and PARD3/PAR3. Component of a complex composed of PALS1, CRB1 and EPB41L5. Within the complex, interacts (via HOOK domain) with EPB41L5 (via FERM domain), and interacts with CRB1 (via intracellular domain). Component of a complex composed of PALS1, MPP3 and CRB1; PALS1 acts as a bridging protein between MPP3 (via guanylate kinase-like domain) and CRB1. Component of a complex composed of CRB3, PALS1 and PATJ. As part of the Crumbs complex; interacts with WWP1, the interaction is enhanced by AMOTL2 and facilitates WWP1 localization to the plasma membrane. The Crumbs complex promotes monoubiquitination of AMOTL2 by WWP1, which activates the Hippo signaling pathway. Interacts (via PDZ domain) with PATJ (via N-terminus). Interacts with EZR. Interacts (via PDZ domain) with CRB1 (via C-terminal ERLI motif). While the PDZ domain is sufficient for interaction with CRB1, the adjacent SH3 and guanylate kinase-like domains are likely to contribute to a high affinity interaction. Interacts with WWTR1/TAZ (via WW domain). Interacts with MPP7. Interacts (via PDZ domain) with CRB3 (via C-terminus). Interacts with LIN7C. Interacts with MPDZ. Interacts with PARD6B. Interacts with SC6A1. Interacts with CDH5; the interaction promotes PALS1 localization to cell junctions and is required for CDH5-mediated vascular lumen formation and endothelial cell. Interacts with NPHP1 (via coiled coil and SH3 domains). Interacts with NPHP4. Interacts with CRB2.

It localises to the golgi apparatus. Its subcellular location is the cell membrane. It is found in the endomembrane system. The protein localises to the cell junction. The protein resides in the tight junction. It localises to the adherens junction. Its subcellular location is the cell projection. It is found in the axon. The protein localises to the perikaryon. The protein resides in the apical cell membrane. Plays a role in tight junction biogenesis and in the establishment of cell polarity in epithelial cells. Also involved in adherens junction biogenesis by ensuring correct localization of the exocyst complex protein EXOC4/SEC8 which allows trafficking of adherens junction structural component CDH1 to the cell surface. Plays a role through its interaction with CDH5 in vascular lumen formation and endothelial membrane polarity. Required during embryonic and postnatal retinal development. Required for the maintenance of cerebellar progenitor cells in an undifferentiated proliferative state, preventing premature differentiation, and is required for cerebellar histogenesis, fissure formation, cerebellar layer organization and cortical development. Plays a role in neuronal progenitor cell survival, potentially via promotion of mTOR signaling. Plays a role in the radial and longitudinal extension of the myelin sheath in Schwann cells. May modulate SC6A1/GAT1-mediated GABA uptake by stabilizing the transporter. May play a role in the T-cell receptor-mediated activation of NF-kappa-B. Required for localization of EZR to the apical membrane of parietal cells and may play a role in the dynamic remodeling of the apical cytoskeleton. Required for the normal polarized localization of the vesicular marker STX4. Required for the correct trafficking of the myelin proteins PMP22 and MAG. Involved in promoting phosphorylation and cytoplasmic retention of transcriptional coactivators YAP1 and WWTR1/TAZ which leads to suppression of TGFB1-dependent transcription of target genes such as CCN2/CTGF, SERPINE1/PAI1, SNAI1/SNAIL1 and SMAD7. This chain is Protein PALS1, found in Canis lupus familiaris (Dog).